Here is a 260-residue protein sequence, read N- to C-terminus: MATETERVGAKGGMEHSFGFTRVDETQKQSMVDSVFHSVAENYDKMNDILSLGLHRVWKNSMVAWLSPPALSHWKVLDVAGGTGDIAFRILKASRQKAHATVLDINGSMLSVGKQRAQKNGLAPLIDFVEANAEHLPFEDQSFDAYTIAFGIRNVPHIDQALREAFRVLKPGGRFLCLEFSNVEMPWLDKIYDLWSFHAIPKLGQFIANDGDAYRYLVESIRKFPKQNDFAHMIKQAGFSRVSYRNLTGAIAALHSGWKI.

S-adenosyl-L-methionine-binding positions include Thr-83, Asp-104, and Asn-132–Ala-133.

Belongs to the class I-like SAM-binding methyltransferase superfamily. MenG/UbiE family.

It carries out the reaction a 2-demethylmenaquinol + S-adenosyl-L-methionine = a menaquinol + S-adenosyl-L-homocysteine + H(+). The enzyme catalyses a 2-methoxy-6-(all-trans-polyprenyl)benzene-1,4-diol + S-adenosyl-L-methionine = a 5-methoxy-2-methyl-3-(all-trans-polyprenyl)benzene-1,4-diol + S-adenosyl-L-homocysteine + H(+). It functions in the pathway quinol/quinone metabolism; menaquinone biosynthesis; menaquinol from 1,4-dihydroxy-2-naphthoate: step 2/2. It participates in cofactor biosynthesis; ubiquinone biosynthesis. Its function is as follows. Methyltransferase required for the conversion of demethylmenaquinol (DMKH2) to menaquinol (MKH2) and the conversion of 2-polyprenyl-6-methoxy-1,4-benzoquinol (DDMQH2) to 2-polyprenyl-3-methyl-6-methoxy-1,4-benzoquinol (DMQH2). This chain is Ubiquinone/menaquinone biosynthesis C-methyltransferase UbiE, found in Bartonella tribocorum (strain CIP 105476 / IBS 506).